We begin with the raw amino-acid sequence, 473 residues long: Photosystem II CP43 reaction center protein (473 aa).

Positions 1–14 (MKTLYSRRRFYHVE) are excised as a propeptide. The residue at position 15 (T15) is an N-acetylthreonine. Position 15 is a phosphothreonine (T15). 5 helical membrane-spanning segments follow: residues 69 to 93 (LFEV…PHLA), 134 to 155 (LLGP…KDRN), 178 to 200 (KALY…RKIT), 255 to 275 (KPFA…LSYS), and 291 to 312 (WFNN…ASQA). E367 is a [CaMn4O5] cluster binding site. The helical transmembrane segment at 447 to 471 (RARAAAAGFEKGIDRDFEPVLSMTP) threads the bilayer.

It belongs to the PsbB/PsbC family. PsbC subfamily. As to quaternary structure, PSII is composed of 1 copy each of membrane proteins PsbA, PsbB, PsbC, PsbD, PsbE, PsbF, PsbH, PsbI, PsbJ, PsbK, PsbL, PsbM, PsbT, PsbX, PsbY, PsbZ, Psb30/Ycf12, at least 3 peripheral proteins of the oxygen-evolving complex and a large number of cofactors. It forms dimeric complexes. It depends on Binds multiple chlorophylls and provides some of the ligands for the Ca-4Mn-5O cluster of the oxygen-evolving complex. It may also provide a ligand for a Cl- that is required for oxygen evolution. PSII binds additional chlorophylls, carotenoids and specific lipids. as a cofactor.

It is found in the plastid. The protein localises to the chloroplast thylakoid membrane. Its function is as follows. One of the components of the core complex of photosystem II (PSII). It binds chlorophyll and helps catalyze the primary light-induced photochemical processes of PSII. PSII is a light-driven water:plastoquinone oxidoreductase, using light energy to abstract electrons from H(2)O, generating O(2) and a proton gradient subsequently used for ATP formation. The protein is Photosystem II CP43 reaction center protein of Solanum bulbocastanum (Wild potato).